The sequence spans 198 residues: Holliday junction resolvase RecU (198 aa).

The tract at residues 1–29 is disordered; that stretch reads MIRYPNGKSYQPKTAASSLQKKPSYSNRG. Over residues 8-29 the composition is skewed to polar residues; that stretch reads KSYQPKTAASSLQKKPSYSNRG. Threonine 83, aspartate 85, glutamate 98, and glutamine 117 together coordinate Mg(2+).

Belongs to the RecU family. The cofactor is Mg(2+).

Its subcellular location is the cytoplasm. It catalyses the reaction Endonucleolytic cleavage at a junction such as a reciprocal single-stranded crossover between two homologous DNA duplexes (Holliday junction).. Endonuclease that resolves Holliday junction intermediates in genetic recombination. Cleaves mobile four-strand junctions by introducing symmetrical nicks in paired strands. Promotes annealing of linear ssDNA with homologous dsDNA. Required for DNA repair, homologous recombination and chromosome segregation. This is Holliday junction resolvase RecU from Bacillus licheniformis (strain ATCC 14580 / DSM 13 / JCM 2505 / CCUG 7422 / NBRC 12200 / NCIMB 9375 / NCTC 10341 / NRRL NRS-1264 / Gibson 46).